The following is a 150-amino-acid chain: U1 small nuclear ribonucleoprotein C (150 aa).

Residues Tyr4–Asp36 form a Matrin-type zinc finger. Residues Ser66–Pro127 are disordered. Positions Asp80–Lys92 are enriched in basic and acidic residues. Positions Asn103 to Met112 are enriched in acidic residues.

This sequence belongs to the U1 small nuclear ribonucleoprotein C family. In terms of assembly, U1 snRNP is composed of the 7 core Sm proteins B/B', D1, D2, D3, E, F and G that assemble in a heptameric protein ring on the Sm site of the small nuclear RNA to form the core snRNP, and at least 3 U1 snRNP-specific proteins U1-70K, U1-A and U1-C. U1-C interacts with U1 snRNA and the 5' splice-site region of the pre-mRNA.

The protein localises to the nucleus. Functionally, component of the spliceosomal U1 snRNP, which is essential for recognition of the pre-mRNA 5' splice-site and the subsequent assembly of the spliceosome. U1-C is directly involved in initial 5' splice-site recognition for both constitutive and regulated alternative splicing. The interaction with the 5' splice-site seems to precede base-pairing between the pre-mRNA and the U1 snRNA. Stimulates commitment or early (E) complex formation by stabilizing the base pairing of the 5' end of the U1 snRNA and the 5' splice-site region. This chain is U1 small nuclear ribonucleoprotein C, found in Candida albicans (strain WO-1) (Yeast).